A 484-amino-acid polypeptide reads, in one-letter code: Glutamate--tRNA ligase (484 aa).

Positions Pro11–Asn21 match the 'HIGH' region motif. Positions Lys252–Arg256 match the 'KMSKS' region motif. Lys255 serves as a coordination point for ATP.

It belongs to the class-I aminoacyl-tRNA synthetase family. Glutamate--tRNA ligase type 1 subfamily. Monomer.

Its subcellular location is the cytoplasm. The catalysed reaction is tRNA(Glu) + L-glutamate + ATP = L-glutamyl-tRNA(Glu) + AMP + diphosphate. Functionally, catalyzes the attachment of glutamate to tRNA(Glu) in a two-step reaction: glutamate is first activated by ATP to form Glu-AMP and then transferred to the acceptor end of tRNA(Glu). This Staphylococcus aureus (strain COL) protein is Glutamate--tRNA ligase.